A 310-amino-acid polypeptide reads, in one-letter code: Ribosomal RNA small subunit methyltransferase H (310 aa).

Residues 32 to 34, Asp51, Phe78, Asp99, and Gln106 each bind S-adenosyl-L-methionine; that span reads AGH.

This sequence belongs to the methyltransferase superfamily. RsmH family.

It is found in the cytoplasm. It catalyses the reaction cytidine(1402) in 16S rRNA + S-adenosyl-L-methionine = N(4)-methylcytidine(1402) in 16S rRNA + S-adenosyl-L-homocysteine + H(+). Functionally, specifically methylates the N4 position of cytidine in position 1402 (C1402) of 16S rRNA. This chain is Ribosomal RNA small subunit methyltransferase H, found in Macrococcus caseolyticus (strain JCSC5402) (Macrococcoides caseolyticum).